Consider the following 1165-residue polypeptide: Chromosome partition protein Smc (1165 aa).

32 to 39 (PNGSGKSN) serves as a coordination point for ATP. Residues 161 to 503 (AGVAEFDRKI…ETQRQVWREA (343 aa)) adopt a coiled-coil conformation. Positions 518–630 (QGVHGLISQL…VFRSLELARR (113 aa)) constitute an SMC hinge domain. 2 coiled-coil regions span residues 672–901 (ELAE…LQQR) and 946–1010 (DLSL…DCDT).

Belongs to the SMC family. As to quaternary structure, homodimer.

The protein localises to the cytoplasm. Required for chromosome condensation and partitioning. The sequence is that of Chromosome partition protein Smc from Gloeobacter violaceus (strain ATCC 29082 / PCC 7421).